Here is a 235-residue protein sequence, read N- to C-terminus: (5-formylfuran-3-yl)methyl phosphate synthase (235 aa).

Lys27 functions as the Schiff-base intermediate with substrate in the catalytic mechanism. Residue Lys85 is the Proton acceptor of the active site.

The protein belongs to the MfnB family. As to quaternary structure, homohexamer. Trimer of dimers.

It carries out the reaction 2 D-glyceraldehyde 3-phosphate = 4-(hydroxymethyl)-2-furancarboxaldehyde phosphate + phosphate + 2 H2O. It functions in the pathway cofactor biosynthesis; methanofuran biosynthesis. Functionally, catalyzes the formation of 4-(hydroxymethyl)-2-furancarboxaldehyde phosphate (4-HFC-P) from two molecules of glyceraldehyde-3-P (GA-3-P). The polypeptide is (5-formylfuran-3-yl)methyl phosphate synthase (Methanocaldococcus jannaschii (strain ATCC 43067 / DSM 2661 / JAL-1 / JCM 10045 / NBRC 100440) (Methanococcus jannaschii)).